The primary structure comprises 427 residues: Gamma-glutamyl phosphate reductase (427 aa).

This sequence belongs to the gamma-glutamyl phosphate reductase family.

It is found in the cytoplasm. The enzyme catalyses L-glutamate 5-semialdehyde + phosphate + NADP(+) = L-glutamyl 5-phosphate + NADPH + H(+). It functions in the pathway amino-acid biosynthesis; L-proline biosynthesis; L-glutamate 5-semialdehyde from L-glutamate: step 2/2. In terms of biological role, catalyzes the NADPH-dependent reduction of L-glutamate 5-phosphate into L-glutamate 5-semialdehyde and phosphate. The product spontaneously undergoes cyclization to form 1-pyrroline-5-carboxylate. This is Gamma-glutamyl phosphate reductase from Bifidobacterium adolescentis (strain ATCC 15703 / DSM 20083 / NCTC 11814 / E194a).